The chain runs to 408 residues: MSPCENDTPINWKRNLIVAWLGCFLTGAAFSLVMPFLPLYVEQLGVTGHSALNMWSGIVFSITFLFSAIASPFWGGLADRKGRKLMLLRSALGMGIVMVLMGLAQNIWQFLILRALLGLLGGFVPNANALIATQVPRNKSGWALGTLSTGGVSGALLGPMAGGLLADSYGLRPVFFITASVLILCFFVTLFCIREKFQPVSKKEMLHMREVVTSLKNPKLVLSLFVTTLIIQVATGSIAPILTLYVRELAGNVSNVAFISGMIASVPGVAALLSAPRLGKLGDRIGPEKILITALIFSVLLLIPMSYVQTPLQLGILRFLLGAADGALLPAVQTLLVYNSSNQIAGRIFSYNQSFRDIGNVTGPLMGAAISANYGFRAVFLVTAGVVLFNAVYSWNSLRRRRIPQISN.

A run of 11 helical transmembrane segments spans residues 16–36, 58–78, 92–112, 115–135, 146–166, 173–193, 224–244, 256–276, 290–310, 319–339, and 378–398; these read LIVA…VMPF, IVFS…GGLA, LGMG…QFLI, ALLG…ATQV, TLST…GLLA, PVFF…LFCI, LFVT…ILTL, VAFI…LSAP, ILIT…YVQT, FLLG…LVYN, and AVFL…WNSL.

It belongs to the major facilitator superfamily. DHA1 family. MdtG (TC 2.A.1.2.20) subfamily.

It localises to the cell inner membrane. Functionally, confers resistance to fosfomycin and deoxycholate. The protein is Multidrug resistance protein MdtG of Escherichia coli O127:H6 (strain E2348/69 / EPEC).